The chain runs to 61 residues: Large ribosomal subunit protein bL32 (61 aa).

The span at 1–22 shows a compositional bias: basic residues; that stretch reads MAVPKKKTSRARRDRRRSHHAL. The segment at 1-24 is disordered; the sequence is MAVPKKKTSRARRDRRRSHHALRG.

The protein belongs to the bacterial ribosomal protein bL32 family.

This is Large ribosomal subunit protein bL32 from Rubrobacter xylanophilus (strain DSM 9941 / JCM 11954 / NBRC 16129 / PRD-1).